The primary structure comprises 1062 residues: Suppressor of mar1-1 protein (1062 aa).

Polar residues predominate over residues 1–17; that stretch reads MSENTTAPSDNITNEQR. Disordered stretches follow at residues 1–27, 188–217, 267–337, 370–398, 595–634, and 681–804; these read MSENTTAPSDNITNEQRLPSGPKDDVD, ENSSNNTSSQHNTSSSRRGPGRPRKDASTS, TKQE…KKRT, SSKFHQIPSSPSNPVSQPAPVRTSRSATQ, EISTRSKIKSAEKPTTKGSSMSPKPRSASISGISDHQQEG, and SGEE…GNLG. S2 bears the N-acetylserine mark. Positions 189–205 are enriched in low complexity; sequence NSSNNTSSQHNTSSSRR. 3 stretches are compositionally biased toward polar residues: residues 267–279, 287–298, and 305–323; these read TKQESLLLSAPSS, SLTSVPQRTNNE, and STANSSSITPTPVTPNNLI. A compositionally biased stretch (basic residues) spans 325–335; that stretch reads IKRKRGRPPKK. Polar residues-rich tracts occupy residues 370–385 and 610–629; these read SSKFHQIPSSPSNPVS and TKGSSMSPKPRSASISGISD. 4 positions are modified to phosphoserine: S378, S379, S628, and S681. The segment covering 685-699 has biased composition (basic and acidic residues); sequence AITKENAEYERKTPG. Residue T697 is modified to Phosphothreonine. The span at 704 to 716 shows a compositional bias: polar residues; sequence TTFVPLENSQPSD. S712 is modified (phosphoserine; by ATM or ATR). S738 is modified (phosphoserine). Residues 781 to 793 show a composition bias toward polar residues; the sequence is KGTSSIHNDTESA. T817 is modified (phosphothreonine).

In terms of assembly, interacts with RFM1. This interaction is required to recruit HST1.

The protein resides in the nucleus. In terms of biological role, DNA-binding protein that specifically binds the regulatory region of middle sporulation genes (MSE). Required for the repression of middle sporulation genes during vegetative growth. Represses expression via the recruitment of histone deacetylase HST1. The polypeptide is Suppressor of mar1-1 protein (SUM1) (Saccharomyces cerevisiae (strain ATCC 204508 / S288c) (Baker's yeast)).